The sequence spans 130 residues: Organ-specific protein P4 (130 aa).

2 repeat units span residues 60–85 (HAKE…DNEI) and 86–111 (HANE…DNEI). A 2 X 26 AA tandem repeats region spans residues 60-111 (HAKENKGAIGEFEPCPNASAYGDNEIHANENKGAIGEFETRPNGSAYGDNEI). A disordered region spans residues 79-130 (AYGDNEIHANENKGAIGEFETRPNGSAYGDNEIGAEFTDDFEPRPSMTKYNA).

The protein to organ specific protein S2. In terms of tissue distribution, expressed in pods.

The chain is Organ-specific protein P4 from Pisum sativum (Garden pea).